A 904-amino-acid polypeptide reads, in one-letter code: UPF0182 protein CKL_0015 (904 aa).

The next 7 membrane-spanning stretches (helical) occupy residues 9–29 (SLIV…DFII), 47–67 (LIAI…SIVL), 96–116 (IFII…AATY), 157–177 (ILSL…TLSV), 208–228 (LAVL…LKCI), 253–273 (YKII…SILV), and 279–299 (IIVS…SYTV).

This sequence belongs to the UPF0182 family.

Its subcellular location is the cell membrane. This chain is UPF0182 protein CKL_0015, found in Clostridium kluyveri (strain ATCC 8527 / DSM 555 / NBRC 12016 / NCIMB 10680 / K1).